Consider the following 255-residue polypeptide: tRNA (guanine-N(7)-)-methyltransferase (255 aa).

Residues 1–31 (MMHDDPNEAGLPPHNDAIPDETAEGADEVNP) are disordered. Residues 18 to 27 (IPDETAEGAD) are compositionally biased toward acidic residues. Residues E86, E111, D138, and D161 each coordinate S-adenosyl-L-methionine. The active site involves D161. Substrate contacts are provided by residues K165, D197, and 232-235 (TKFE).

The protein belongs to the class I-like SAM-binding methyltransferase superfamily. TrmB family.

It carries out the reaction guanosine(46) in tRNA + S-adenosyl-L-methionine = N(7)-methylguanosine(46) in tRNA + S-adenosyl-L-homocysteine. It functions in the pathway tRNA modification; N(7)-methylguanine-tRNA biosynthesis. Catalyzes the formation of N(7)-methylguanine at position 46 (m7G46) in tRNA. The polypeptide is tRNA (guanine-N(7)-)-methyltransferase (Burkholderia cenocepacia (strain HI2424)).